The primary structure comprises 34 residues: Photosystem II reaction center protein Psb30 (34 aa).

The chain crosses the membrane as a helical span at residues 9–29 (QLIATGTIMLAGPAVIVLLAL).

Belongs to the Psb30/Ycf12 family. As to quaternary structure, PSII is composed of 1 copy each of membrane proteins PsbA, PsbB, PsbC, PsbD, PsbE, PsbF, PsbH, PsbI, PsbJ, PsbK, PsbL, PsbM, PsbT, PsbX, PsbY, PsbZ, Psb30/Ycf12, peripheral proteins of the oxygen-evolving complex and a large number of cofactors. It forms dimeric complexes.

The protein localises to the plastid. Its subcellular location is the chloroplast thylakoid membrane. Its function is as follows. A core subunit of photosystem II (PSII), probably helps stabilize the reaction center. The polypeptide is Photosystem II reaction center protein Psb30 (Phaeodactylum tricornutum (strain CCAP 1055/1)).